A 312-amino-acid chain; its full sequence is Type II methyltransferase M.NgoMIV (312 aa).

Residues 3–311 (FTSLEICAGA…RQIIKALKKE (309 aa)) enclose the SAM-dependent MTase C5-type domain. Cys-74 is an active-site residue.

Belongs to the class I-like SAM-binding methyltransferase superfamily. C5-methyltransferase family.

The catalysed reaction is a 2'-deoxycytidine in DNA + S-adenosyl-L-methionine = a 5-methyl-2'-deoxycytidine in DNA + S-adenosyl-L-homocysteine + H(+). A methylase, recognizes the double-stranded sequence 5'-GCCGGC-3', methylates C-2 on both strands, and protects the DNA from cleavage by the NgoMIV endonuclease. The sequence is that of Type II methyltransferase M.NgoMIV (ngoMIVM) from Neisseria gonorrhoeae.